Reading from the N-terminus, the 533-residue chain is Probable protein kinase UbiB (533 aa).

A helical membrane pass occupies residues 24 to 44 (LILELPMLPWWLRLLGAALPW). In terms of domain architecture, Protein kinase spans 126–494 (RFEREPLASA…WKSSRHDWLG (369 aa)). ATP contacts are provided by residues 132-140 (LASASVAQV) and Lys154. The active-site Proton acceptor is Asp289. A helical membrane pass occupies residues 510–530 (LGQQLEAWPAWVMLAGGVFLI).

It belongs to the ABC1 family. UbiB subfamily.

The protein localises to the cell inner membrane. It functions in the pathway cofactor biosynthesis; ubiquinone biosynthesis [regulation]. Its function is as follows. Is probably a protein kinase regulator of UbiI activity which is involved in aerobic coenzyme Q (ubiquinone) biosynthesis. The sequence is that of Probable protein kinase UbiB from Pseudomonas paraeruginosa (strain DSM 24068 / PA7) (Pseudomonas aeruginosa (strain PA7)).